A 213-amino-acid polypeptide reads, in one-letter code: Adenylate kinase (213 aa).

Position 10-15 (10-15 (GSGKGS)) interacts with ATP. The segment at 30–60 (STGNLFRAILKEDSELARKIKEINVSGGKLV) is NMP. Residues T31, R36, 58–60 (KLV), 87–90 (GYPR), and Q94 contribute to the AMP site. The tract at residues 123 to 160 (GRWMCPKCAGIYNIHFKKPQVDGVCDNDQATLYQRADD) is LID. Residue R124 participates in ATP binding. Zn(2+) contacts are provided by C127 and C130. An ATP-binding site is contributed by 133–134 (IY). Residues C147 and D150 each coordinate Zn(2+). Positions 157 and 168 each coordinate AMP. Q196 is a binding site for ATP.

The protein belongs to the adenylate kinase family. As to quaternary structure, monomer.

Its subcellular location is the cytoplasm. The catalysed reaction is AMP + ATP = 2 ADP. It participates in purine metabolism; AMP biosynthesis via salvage pathway; AMP from ADP: step 1/1. In terms of biological role, catalyzes the reversible transfer of the terminal phosphate group between ATP and AMP. Plays an important role in cellular energy homeostasis and in adenine nucleotide metabolism. This is Adenylate kinase from Ureaplasma urealyticum serovar 10 (strain ATCC 33699 / Western).